We begin with the raw amino-acid sequence, 299 residues long: Tyrosine recombinase XerD (299 aa).

Residues 3–88 (QQDNPLIEQF…AMRRLFQYLY (86 aa)) form the Core-binding (CB) domain. In terms of domain architecture, Tyr recombinase spans 109-293 (RLPKDLSEAQ…ATERLRQLHQ (185 aa)). Active-site residues include Arg149, Lys173, His245, Arg248, and His271. The active-site O-(3'-phospho-DNA)-tyrosine intermediate is the Tyr280.

This sequence belongs to the 'phage' integrase family. XerD subfamily. As to quaternary structure, forms a cyclic heterotetrameric complex composed of two molecules of XerC and two molecules of XerD, in which XerC interacts with XerD via its C-terminal region, XerD interacts with XerC via its C-terminal region and so on.

Its subcellular location is the cytoplasm. Its activity is regulated as follows. FtsK may regulate the catalytic switch between XerC and XerD in the heterotetrameric complex during the two steps of the recombination process. Its function is as follows. Site-specific tyrosine recombinase, which acts by catalyzing the cutting and rejoining of the recombining DNA molecules. Binds cooperatively to specific DNA consensus sequences that are separated from XerC binding sites by a short central region, forming the heterotetrameric XerC-XerD complex that recombines DNA substrates. The complex is essential to convert dimers of the bacterial chromosome into monomers to permit their segregation at cell division. It also contributes to the segregational stability of plasmids. In the complex XerD specifically exchanges the bottom DNA strands. The polypeptide is Tyrosine recombinase XerD (Yersinia pestis).